Consider the following 147-residue polypeptide: Large ribosomal subunit protein uL13 (147 aa).

It belongs to the universal ribosomal protein uL13 family. As to quaternary structure, part of the 50S ribosomal subunit.

In terms of biological role, this protein is one of the early assembly proteins of the 50S ribosomal subunit, although it is not seen to bind rRNA by itself. It is important during the early stages of 50S assembly. This Rhodococcus jostii (strain RHA1) protein is Large ribosomal subunit protein uL13.